The sequence spans 488 residues: MKYSDLRDFIAQLESRELLKRIDYPVSPHLEMTVVSDKVLRSGGPALLFTNTPNYDMPVLTNLFGTVERVALGMGEESIVALREIGKLLAALKEPDPPKGFKDAFSKLPLLKQALNMAPKYVSGAECQTHVWEKDEVDLTLLPIQTCWPGDVAPLITWGLVTTRGPHQSRENMGIYRQQLLSKNKLIMRWLSHRGGALDYQAWQQEYPKERFPVAVTLGADPATILAAVTPVPDTLSEYAFAGLLRGQRTRLTRCIGNDLHVPASAEIVLEGYLEPGNEAPEGPYGDHTGYYNEVQSFPVFTVERITHRDKPIYHSTYTGRPPDEPAILGVALNEVFIPLLQKQFPEIVDFYLPPEGCSYRLAVVTIKKQYPGHAKRIMMAVWSFLRQFMYTKFVIVCDDDVDARNWQDVIWAMTTRMDPSRDTVMVENTPIDYLDFASPVSGLGSKMGMDATSKWPGETQREWGKPITMDEDVLNRVNGYWSLLGLK.

Asn-172 contacts Mn(2+). Prenylated FMN-binding positions include 175–177 (IYR), 189–191 (RWL), and 194–195 (RG). Position 238 (Glu-238) interacts with Mn(2+). Residue Asp-287 is the Proton donor of the active site.

The protein belongs to the UbiD family. Homohexamer. Requires prenylated FMN as cofactor. The cofactor is Mn(2+).

The protein resides in the cell membrane. The enzyme catalyses a 4-hydroxy-3-(all-trans-polyprenyl)benzoate + H(+) = a 2-(all-trans-polyprenyl)phenol + CO2. It participates in cofactor biosynthesis; ubiquinone biosynthesis. Catalyzes the decarboxylation of 3-octaprenyl-4-hydroxy benzoate to 2-octaprenylphenol, an intermediate step in ubiquinone biosynthesis. This Legionella pneumophila (strain Lens) protein is 3-octaprenyl-4-hydroxybenzoate carboxy-lyase.